A 105-amino-acid polypeptide reads, in one-letter code: Flexible cuticle protein 12 (105 aa).

Positions 1 to 16 are cleaved as a signal peptide; the sequence is MKSFVVVALLVAVAAA. Residues 37-105 enclose the Chitin-binding type R&amp;R domain; that stretch reads VEGFQYGYET…KPVGAHIPVA (69 aa).

This chain is Flexible cuticle protein 12 (CP12), found in Hyalophora cecropia (Cecropia moth).